The primary structure comprises 451 residues: Glycine--tRNA ligase (451 aa).

Arg-94 and Glu-164 together coordinate substrate. Residues 196–198, 206–211, 281–282, and 325–328 each bind ATP; these read RNE, FRTREF, EL, and GVER. 211–215 lines the substrate pocket; that stretch reads FEQME. Position 321 to 325 (321 to 325) interacts with substrate; the sequence is EPSVG.

Belongs to the class-II aminoacyl-tRNA synthetase family. Homodimer.

Its subcellular location is the cytoplasm. It catalyses the reaction tRNA(Gly) + glycine + ATP = glycyl-tRNA(Gly) + AMP + diphosphate. Catalyzes the attachment of glycine to tRNA(Gly). The protein is Glycine--tRNA ligase of Mesoplasma florum (strain ATCC 33453 / NBRC 100688 / NCTC 11704 / L1) (Acholeplasma florum).